A 400-amino-acid polypeptide reads, in one-letter code: DNA polymerase IV (400 aa).

The region spanning 5 to 187 is the UmuC domain; that stretch reads IFLVDMNAFF…LPVEFMNGIG (183 aa). Residues D9 and D105 each contribute to the Mg(2+) site. E106 is an active-site residue.

Belongs to the DNA polymerase type-Y family. As to quaternary structure, monomer. Mg(2+) is required as a cofactor.

The protein localises to the cytoplasm. It carries out the reaction DNA(n) + a 2'-deoxyribonucleoside 5'-triphosphate = DNA(n+1) + diphosphate. Poorly processive, error-prone DNA polymerase involved in untargeted mutagenesis. Copies undamaged DNA at stalled replication forks, which arise in vivo from mismatched or misaligned primer ends. These misaligned primers can be extended by PolIV. Exhibits no 3'-5' exonuclease (proofreading) activity. May be involved in translesional synthesis, in conjunction with the beta clamp from PolIII. This is DNA polymerase IV from Clostridium kluyveri (strain ATCC 8527 / DSM 555 / NBRC 12016 / NCIMB 10680 / K1).